Consider the following 236-residue polypeptide: Protein YIPF6 (236 aa).

An N-acetylalanine modification is found at Ala2. At 2 to 84 the chain is on the cytoplasmic side; sequence AEAEDSPGEQ…HVLYPRKSNA (83 aa). Phosphoserine is present on Ser7. The helical transmembrane segment at 85–105 threads the bilayer; sequence LLRDWDLWGPLILCVTLALML. Residues 106–116 are Lumenal-facing; sequence QKSSIDGKNDG. Residues 117–137 form a helical membrane-spanning segment; the sequence is GGPEFAEVFVIIWFGAVTITL. Residues 138–147 are Cytoplasmic-facing; sequence NSKLLGGNIS. A helical transmembrane segment spans residues 148–168; sequence FFQSLCVLGYCILPLNIAMLI. Topologically, residues 169–185 are lumenal; the sequence is CRLLLLAGQGPINFMIR. Residues 186–206 form a helical membrane-spanning segment; sequence LFVVLLMFAWSVVASTAFLAD. At 207-213 the chain is on the cytoplasmic side; the sequence is SQPPNRK. The helical transmembrane segment at 214–234 threads the bilayer; that stretch reads ALAVYPVFLFYFVISWMILTF. The Lumenal segment spans residues 235–236; it reads TP.

The protein belongs to the YIP1 family. Predominantly interacts with YIPF1 or YIPF2, but may also form a ternary complex with YIPF1 and YIPF2. This interaction may stabilize YIPF1 and YIPF2.

It localises to the golgi apparatus membrane. In terms of biological role, may be required for stable YIPF1 and YIPF2 protein expression. The protein is Protein YIPF6 (Yipf6) of Mus musculus (Mouse).